The primary structure comprises 702 residues: Protein-glucosylgalactosylhydroxylysine glucosidase (702 aa).

Substrate is bound at residue 310 to 311 (WD). Glu-440 (proton donor) is an active-site residue. 508-509 (KQ) lines the substrate pocket.

The protein belongs to the glycosyl hydrolase 65 family.

The enzyme catalyses (5R)-5-O-[alpha-D-glucosyl-(1-&gt;2)-beta-D-galactosyl]-5-hydroxy-L-lysyl-[collagen] + H2O = (5R)-5-O-(beta-D-galactosyl)-5-hydroxy-L-lysyl-[collagen] + D-glucose. Catalyzes the hydrolysis of glucose from the disaccharide unit linked to hydroxylysine residues of collagen and collagen-like proteins. This is Protein-glucosylgalactosylhydroxylysine glucosidase from Gallus gallus (Chicken).